An 88-amino-acid chain; its full sequence is Arminin 1c (88 aa).

Residues 1–18 form the signal peptide; it reads MKPVFVILFLTCIAFTYA. The propeptide occupies 19–57; sequence ESYEDVKEEIKNEVEREIFEDLEEESDVLDSNVREFNDA. At valine 85 the chain carries Valine amide.

The protein belongs to the arminin family. Expressed in entodermal epithelium along the body column.

The protein resides in the secreted. It localises to the target cell membrane. In terms of biological role, antimicrobial peptide with a broad-spectrum antimicrobial activity. Keeps its antibacterial activity under a wide range of salt concentrations that mimic physiological conditions of human blood, which is surprising, since Hydra is an obligate freshwater animal with nearly no salt tolerance. Does not affect red blood cells. This is Arminin 1c from Hydra vulgaris (Hydra).